A 360-amino-acid chain; its full sequence is MFVDSVEIIIASGKGGPGMVSFRREKFVIKGGPDGGDGGDGGDVYFEVDNNTDTLASFRGTKHHKAKNGAPGGTRNCTGKKGEDKIIIVPPGTQVFADGALWLDLITPKERVLALKGGKGGLGNAHFKSATKQQPTYAQKGLEGVEKCVRLELKLIADIGLVGFPNAGKSTLISTISNAKPKIAHYEFTTLVPNLGVVSVDEKSGFLMADIPGIIEGASEGKGLGISFLKHIERTKVLAFVLDASRLDLGIKEQYKRLRLELEKFSPALANKPFGVLLNKCDVAEDIDTMTKDFCTFLNLKVQKLEAFDLEPYLGFLHPKLMGNFEKDLNEKSALFILPLSAVSALNTHALKFVLLEALP.

One can recognise an Obg domain in the interval M1–I156. Positions A157 to P360 constitute an OBG-type G domain. GTP-binding positions include G163–S170, F188–V192, D210–G213, N279–D282, and S341–V343. Residues S170 and T190 each coordinate Mg(2+).

This sequence belongs to the TRAFAC class OBG-HflX-like GTPase superfamily. OBG GTPase family. As to quaternary structure, monomer. The cofactor is Mg(2+).

It is found in the cytoplasm. An essential GTPase which binds GTP, GDP and possibly (p)ppGpp with moderate affinity, with high nucleotide exchange rates and a fairly low GTP hydrolysis rate. Plays a role in control of the cell cycle, stress response, ribosome biogenesis and in those bacteria that undergo differentiation, in morphogenesis control. The chain is GTPase Obg from Helicobacter acinonychis (strain Sheeba).